A 503-amino-acid chain; its full sequence is UDP-N-acetylmuramate--L-alanine ligase (503 aa).

Residues 1-22 (MIKQTHVSNSSNNSTNSTAAQV) are disordered. Low complexity predominate over residues 8–18 (SNSSNNSTNST). An ATP-binding site is contributed by 135 to 141 (GTHGKTT).

Belongs to the MurCDEF family.

The protein localises to the cytoplasm. It catalyses the reaction UDP-N-acetyl-alpha-D-muramate + L-alanine + ATP = UDP-N-acetyl-alpha-D-muramoyl-L-alanine + ADP + phosphate + H(+). It functions in the pathway cell wall biogenesis; peptidoglycan biosynthesis. In terms of biological role, cell wall formation. The chain is UDP-N-acetylmuramate--L-alanine ligase from Colwellia psychrerythraea (strain 34H / ATCC BAA-681) (Vibrio psychroerythus).